The chain runs to 491 residues: Monocarboxylate transport permease protein (491 aa).

13 helical membrane passes run 7 to 27 (GTAL…GFVA), 55 to 75 (WFLV…PALV), 83 to 103 (FFAL…MPVL), 130 to 150 (LAVA…QLVG), 157 to 177 (ALGL…ALYT), 187 to 207 (LIAF…VALI), 246 to 266 (LALG…GIFA), 277 to 297 (AIML…GYMG), 322 to 342 (WFSG…AAVM), 374 to 396 (ITSL…QFAL), 400 to 422 (LLGG…TNWF), 427 to 447 (LLAG…DAGW), and 465 to 485 (GLLA…LLPA).

It belongs to the sodium:solute symporter (SSF) (TC 2.A.21) family.

It is found in the cell membrane. Its activity is regulated as follows. Inhibited by CCCP, but is apparently not affected by the concentration of sodium. Low-affinity transporter of alanine and high-affinity transporter of lactate and pyruvate. Can also transport other monocarboxylates such as propionate, butyrate, alpha-hydroxybutyrate or acetate. May be proton coupled. Required for optimal growth on alanine or pyruvate and ammonia. The protein is Monocarboxylate transport permease protein of Rhizobium johnstonii (strain DSM 114642 / LMG 32736 / 3841) (Rhizobium leguminosarum bv. viciae).